Consider the following 68-residue polypeptide: DNA-directed RNA polymerase subunit omega (68 aa).

The protein belongs to the RNA polymerase subunit omega family. As to quaternary structure, the RNAP catalytic core consists of 2 alpha, 1 beta, 1 beta' and 1 omega subunit. When a sigma factor is associated with the core the holoenzyme is formed, which can initiate transcription.

It catalyses the reaction RNA(n) + a ribonucleoside 5'-triphosphate = RNA(n+1) + diphosphate. Functionally, promotes RNA polymerase assembly. Latches the N- and C-terminal regions of the beta' subunit thereby facilitating its interaction with the beta and alpha subunits. The polypeptide is DNA-directed RNA polymerase subunit omega (Neisseria meningitidis serogroup C (strain 053442)).